The sequence spans 206 residues: Ribosome maturation factor RimM (206 aa).

The 94-residue stretch at 113–206 (DDEYYWVDLI…RIDSNWPTEL (94 aa)) folds into the PRC barrel domain.

This sequence belongs to the RimM family. In terms of assembly, binds ribosomal protein uS19.

It is found in the cytoplasm. In terms of biological role, an accessory protein needed during the final step in the assembly of 30S ribosomal subunit, possibly for assembly of the head region. Essential for efficient processing of 16S rRNA. May be needed both before and after RbfA during the maturation of 16S rRNA. It has affinity for free ribosomal 30S subunits but not for 70S ribosomes. This Bordetella petrii (strain ATCC BAA-461 / DSM 12804 / CCUG 43448) protein is Ribosome maturation factor RimM.